A 115-amino-acid chain; its full sequence is MASPGFHRPSGRSQHVCMRITIRSHKKMRRYSILRSFFSLGLIACFCIFLIIVLSEEPNMRLLYKLSYGYVKILNNVKLLESIASCIRCGRITSVNDLNQFVFQSTAVFFTNKTD.

A helical membrane pass occupies residues 36–56 (SFFSLGLIACFCIFLIIVLSE).

It is found in the membrane. This is an uncharacterized protein from Saccharomyces cerevisiae (strain ATCC 204508 / S288c) (Baker's yeast).